We begin with the raw amino-acid sequence, 498 residues long: Death-associated inhibitor of apoptosis 2 (498 aa).

3 BIR repeats span residues Arg12–Leu77, Arg116–Gln180, and Arg215–Leu280. Cys249, Cys252, His269, and Cys276 together coordinate Zn(2+). The RING-type zinc finger occupies Cys451–Arg486.

The protein belongs to the IAP family. As to quaternary structure, interacts with the caspase Strica. Interacts (via BIR2 domain) with rpr and grim. Interacts (via the BIR2 and BIR3 domains) with hid. Interacts (via BIR3 domain) with Drice. Interacts with Dredd; likely to bind Dredd simultaneously with Fadd to form a trimeric complex. Caspase-dependent cleavage is required for suppression of Drice-mediated cell death. In terms of tissue distribution, expressed in both principal and stellar cells of the Malphigian tubules.

Its subcellular location is the nucleus. It is found in the cytoplasm. Functionally, required for activation of NF-kappaB transcription factors in the immune deficiency (Imd) signaling cascade which is essential for innate immune responses upon infection by Gram-negative bacteria. Promotes cytoplasmic cleavage of Rel and its translocation to the nucleus where it drives expression of antimicrobial peptides. Binds, polyubiquitinates and activates Dredd which is required for Rel-mediated induction of antimicrobial peptides. Anti-apoptotic protein which binds, ubiquitinates and inactivates the effector caspase Drice. Suppresses rpr and hid-dependent cell death in the eye. However, has also been shown to have little, if any, role in the regulation of the canonical caspase-dependent apoptosis pathway. Plays a role in regulating the expression of ion channels. The sequence is that of Death-associated inhibitor of apoptosis 2 (Diap2) from Drosophila melanogaster (Fruit fly).